Consider the following 476-residue polypeptide: Siroheme synthase (476 aa).

The segment at 1–204 (MDYFPVFLNI…GKDQAAQDYL (204 aa)) is precorrin-2 dehydrogenase /sirohydrochlorin ferrochelatase. NAD(+) is bound by residues 22–23 (SV) and 43–44 (PT). At Ser129 the chain carries Phosphoserine. Residues 218-476 (GEVYLVGAGP…GNTPGYSKHP (259 aa)) form a uroporphyrinogen-III C-methyltransferase region. S-adenosyl-L-methionine is bound at residue Pro227. The Proton acceptor role is filled by Asp250. The active-site Proton donor is Lys272. Residues 303–305 (GGD), Ile308, 333–334 (TA), Met385, and Gly414 each bind S-adenosyl-L-methionine.

It in the N-terminal section; belongs to the precorrin-2 dehydrogenase / sirohydrochlorin ferrochelatase family. This sequence in the C-terminal section; belongs to the precorrin methyltransferase family.

The catalysed reaction is uroporphyrinogen III + 2 S-adenosyl-L-methionine = precorrin-2 + 2 S-adenosyl-L-homocysteine + H(+). It carries out the reaction precorrin-2 + NAD(+) = sirohydrochlorin + NADH + 2 H(+). It catalyses the reaction siroheme + 2 H(+) = sirohydrochlorin + Fe(2+). It functions in the pathway cofactor biosynthesis; adenosylcobalamin biosynthesis; precorrin-2 from uroporphyrinogen III: step 1/1. Its pathway is cofactor biosynthesis; adenosylcobalamin biosynthesis; sirohydrochlorin from precorrin-2: step 1/1. The protein operates within porphyrin-containing compound metabolism; siroheme biosynthesis; precorrin-2 from uroporphyrinogen III: step 1/1. It participates in porphyrin-containing compound metabolism; siroheme biosynthesis; siroheme from sirohydrochlorin: step 1/1. It functions in the pathway porphyrin-containing compound metabolism; siroheme biosynthesis; sirohydrochlorin from precorrin-2: step 1/1. Multifunctional enzyme that catalyzes the SAM-dependent methylations of uroporphyrinogen III at position C-2 and C-7 to form precorrin-2 via precorrin-1. Then it catalyzes the NAD-dependent ring dehydrogenation of precorrin-2 to yield sirohydrochlorin. Finally, it catalyzes the ferrochelation of sirohydrochlorin to yield siroheme. This chain is Siroheme synthase, found in Nitrosomonas eutropha (strain DSM 101675 / C91 / Nm57).